The sequence spans 561 residues: Centromere protein T (561 aa).

The tract at residues Met1–Glu83 is disordered. Residues Arg18 to Thr27 are compositionally biased toward basic and acidic residues. A compositionally biased stretch (low complexity) spans Ala34 to Ala46. Ser47 carries the post-translational modification Phosphoserine. Thr85 carries the phosphothreonine modification. A flexible stalk domain region spans residues Ile93–Pro421. Disordered regions lie at residues His256 to Pro292 and Ala333 to Lys457. The segment covering Lys276–Ser288 has biased composition (polar residues). Residues Ser343, Ser345, and Ser356 each carry the phosphoserine modification. The span at Arg357–Val367 shows a compositional bias: basic and acidic residues. Ser373, Ser385, Ser386, and Ser397 each carry phosphoserine. Residues Ala395–Ser407 show a composition bias toward low complexity.

The protein belongs to the CENP-T/CNN1 family. Component of the CENPA-CAD complex, composed of CENPI, CENPK, CENPL, CENPO, CENPP, CENPQ, CENPR and CENPS. The CENPA-CAD complex is probably recruited on centromeres by the CENPA-NAC complex, at least composed of CENPA, CENPC, CENPH, CENPM, CENPN, CENPT and CENPU. Identified in a centromeric complex containing histones H2A, H2B, H3 and H4, and at least CENPA, CENPB, CENPC, CENPT, CENPN, HJURP, SUPT16H, SSRP1 and RSF1. Interacts (via N-terminus) with the NDC80 complex. Heterodimer with CENPW; this dimer coassembles with CENPS-CENPX heterodimers at centromeres to form the tetrameric CENP-T-W-S-X complex. Dynamically phosphorylated at Ser-47 and probably also other sites during the cell cycle. Phosphorylated at Ser-47 during G2 phase, metaphase and anaphase, but not during telophase or G1 phase.

The protein resides in the nucleus. Its subcellular location is the chromosome. It is found in the centromere. It localises to the kinetochore. Component of the CENPA-NAC (nucleosome-associated) complex, a complex that plays a central role in assembly of kinetochore proteins, mitotic progression and chromosome segregation. The CENPA-NAC complex recruits the CENPA-CAD (nucleosome distal) complex and may be involved in incorporation of newly synthesized CENPA into centromeres. Part of a nucleosome-associated complex that binds specifically to histone H3-containing nucleosomes at the centromere, as opposed to nucleosomes containing CENPA. Component of the heterotetrameric CENP-T-W-S-X complex that binds and supercoils DNA, and plays an important role in kinetochore assembly. CENPT has a fundamental role in kinetochore assembly and function. It is one of the inner kinetochore proteins, with most further proteins binding downstream. Required for normal chromosome organization and normal progress through mitosis. This chain is Centromere protein T (CENPT), found in Homo sapiens (Human).